The following is an 81-amino-acid chain: Three-finger toxin A1 (81 aa).

The N-terminal stretch at methionine 1–threonine 21 is a signal peptide. 4 disulfide bridges follow: cysteine 24–cysteine 43, cysteine 38–cysteine 60, cysteine 62–cysteine 73, and cysteine 74–cysteine 79.

It belongs to the three-finger toxin family. Short-chain subfamily. Type I alpha-neurotoxin sub-subfamily. In terms of tissue distribution, expressed by the venom gland.

The protein localises to the secreted. Functionally, binds and inhibits fetal (alpha-1-beta-1-gamma-delta/CHRNA1-CHRNB1-CHRNG-CHRND, IC(50)=1.4 nM), adult (alpha-1-beta-1-delta-epsilon/CHRNA1-CHRNB1-CHRND-CHRNE, IC(50)=12 nM) and neuronal alpha-7/CHRNA7 (IC(50)=400 nM) nicotinic acetylcholine receptors (nAChR) thereby impairing neuromuscular and neuronal transmissions. The polypeptide is Three-finger toxin A1 (Micrurus laticollaris (Balsas coral snake)).